Reading from the N-terminus, the 24-residue chain is Potassium channel toxin alpha-KTx 6 OcyKTx5 (24 aa).

The cysteines at positions 3 and 24 are disulfide-linked.

This sequence belongs to the short scorpion toxin superfamily. Potassium channel inhibitor family. Alpha-KTx 06 subfamily. As to expression, expressed by the venom gland.

Its subcellular location is the secreted. Its function is as follows. Blocks voltage-gated potassium channels. This Opisthacanthus cayaporum (South American scorpion) protein is Potassium channel toxin alpha-KTx 6 OcyKTx5.